We begin with the raw amino-acid sequence, 229 residues long: Cytidylate kinase (229 aa).

An ATP-binding site is contributed by 12 to 20 (GPSGAGKGT).

This sequence belongs to the cytidylate kinase family. Type 1 subfamily.

It localises to the cytoplasm. It carries out the reaction CMP + ATP = CDP + ADP. The catalysed reaction is dCMP + ATP = dCDP + ADP. The sequence is that of Cytidylate kinase from Shewanella frigidimarina (strain NCIMB 400).